Consider the following 1342-residue polypeptide: DNA-directed RNA polymerase subunit beta (1342 aa).

This sequence belongs to the RNA polymerase beta chain family. In terms of assembly, the RNAP catalytic core consists of 2 alpha, 1 beta, 1 beta' and 1 omega subunit. When a sigma factor is associated with the core the holoenzyme is formed, which can initiate transcription.

It catalyses the reaction RNA(n) + a ribonucleoside 5'-triphosphate = RNA(n+1) + diphosphate. DNA-dependent RNA polymerase catalyzes the transcription of DNA into RNA using the four ribonucleoside triphosphates as substrates. This chain is DNA-directed RNA polymerase subunit beta, found in Vibrio parahaemolyticus serotype O3:K6 (strain RIMD 2210633).